The chain runs to 870 residues: Protein translocase subunit SecA (870 aa).

ATP-binding positions include Gln-86, 104 to 108 (GEGKT), and Asp-499. 4 residues coordinate Zn(2+): Cys-854, Cys-856, Cys-865, and His-866.

It belongs to the SecA family. In terms of assembly, monomer and homodimer. Part of the essential Sec protein translocation apparatus which comprises SecA, SecYEG and auxiliary proteins SecDF-YajC and YidC. It depends on Zn(2+) as a cofactor.

The protein localises to the cell inner membrane. It localises to the cytoplasm. It carries out the reaction ATP + H2O + cellular proteinSide 1 = ADP + phosphate + cellular proteinSide 2.. In terms of biological role, part of the Sec protein translocase complex. Interacts with the SecYEG preprotein conducting channel. Has a central role in coupling the hydrolysis of ATP to the transfer of proteins into and across the cell membrane, serving both as a receptor for the preprotein-SecB complex and as an ATP-driven molecular motor driving the stepwise translocation of polypeptide chains across the membrane. This chain is Protein translocase subunit SecA, found in Ehrlichia ruminantium (strain Welgevonden).